Reading from the N-terminus, the 118-residue chain is UPF0342 protein Hore_03100 (118 aa).

This sequence belongs to the UPF0342 family.

The sequence is that of UPF0342 protein Hore_03100 from Halothermothrix orenii (strain H 168 / OCM 544 / DSM 9562).